A 79-amino-acid chain; its full sequence is Inhibitor of host cell division protein (79 aa).

A coiled-coil region spans residues 15-35 (RQQRSAMLEQEQAEKDKKERR). A helical transmembrane segment spans residues 37-57 (AGLLFFGTIVVLVAVVAVYIV).

It is found in the host membrane. Functionally, inhibits host cell division leading to filamentation. Does not prevent host cell growth, DNA synthesis or chromosome segregation. Does not seem to be essential for productive bacterial host infection. The polypeptide is Inhibitor of host cell division protein (Bacillus subtilis (Bacteriophage SP01)).